Here is a 500-residue protein sequence, read N- to C-terminus: Probable glycine dehydrogenase (decarboxylating) subunit 2 (500 aa).

Position 273 is an N6-(pyridoxal phosphate)lysine (K273).

This sequence belongs to the GcvP family. C-terminal subunit subfamily. The glycine cleavage system is composed of four proteins: P, T, L and H. In this organism, the P 'protein' is a heterodimer of two subunits. The cofactor is pyridoxal 5'-phosphate.

The catalysed reaction is N(6)-[(R)-lipoyl]-L-lysyl-[glycine-cleavage complex H protein] + glycine + H(+) = N(6)-[(R)-S(8)-aminomethyldihydrolipoyl]-L-lysyl-[glycine-cleavage complex H protein] + CO2. Functionally, the glycine cleavage system catalyzes the degradation of glycine. The P protein binds the alpha-amino group of glycine through its pyridoxal phosphate cofactor; CO(2) is released and the remaining methylamine moiety is then transferred to the lipoamide cofactor of the H protein. In Rhodopirellula baltica (strain DSM 10527 / NCIMB 13988 / SH1), this protein is Probable glycine dehydrogenase (decarboxylating) subunit 2.